The chain runs to 558 residues: Leucine-rich repeat-containing protein 71 (558 aa).

The span at Met1–Gly18 shows a compositional bias: low complexity. 2 disordered regions span residues Met1–Glu55 and Arg86–Cys112. Residues Lys28–Thr38 are compositionally biased toward basic and acidic residues. Residues Arg86–Glu99 are compositionally biased toward polar residues. 4 LRR repeats span residues Thr196–Met216, Thr221–Gly241, Thr253–Asp274, and Ser281–Glu302. The interval Gly325–Val415 is disordered. Basic and acidic residues-rich tracts occupy residues Gly339–Ser348 and Lys380–Leu391.

This chain is Leucine-rich repeat-containing protein 71 (Lrrc71), found in Mus musculus (Mouse).